The chain runs to 237 residues: V-type proton ATPase subunit E (237 aa).

The protein belongs to the V-ATPase E subunit family. In terms of assembly, V-ATPase is a heteromultimeric enzyme composed of a peripheral catalytic V1 complex (components A to H) attached to an integral membrane V0 proton pore complex (components: a, c, c', c'' and d).

Its function is as follows. Subunit of the peripheral V1 complex of vacuolar ATPase essential for assembly or catalytic function. V-ATPase is responsible for acidifying a variety of intracellular compartments in eukaryotic cells. This chain is V-type proton ATPase subunit E (VATE), found in Gossypium hirsutum (Upland cotton).